The following is a 385-amino-acid chain: tRNA-specific 2-thiouridylase MnmA (385 aa).

ATP contacts are provided by residues Gly-12 to Ser-19 and Met-38. The interval Asn-108 to Asp-110 is interaction with target base in tRNA. Cys-113 acts as the Nucleophile in catalysis. A disulfide bridge connects residues Cys-113 and Cys-210. Gly-138 provides a ligand contact to ATP. The segment at Lys-160 to Gln-162 is interaction with tRNA. Catalysis depends on Cys-210, which acts as the Cysteine persulfide intermediate.

This sequence belongs to the MnmA/TRMU family.

It localises to the cytoplasm. The catalysed reaction is S-sulfanyl-L-cysteinyl-[protein] + uridine(34) in tRNA + AH2 + ATP = 2-thiouridine(34) in tRNA + L-cysteinyl-[protein] + A + AMP + diphosphate + H(+). In terms of biological role, catalyzes the 2-thiolation of uridine at the wobble position (U34) of tRNA, leading to the formation of s(2)U34. This is tRNA-specific 2-thiouridylase MnmA from Ureaplasma parvum serovar 3 (strain ATCC 27815 / 27 / NCTC 11736).